We begin with the raw amino-acid sequence, 120 residues long: Large ribosomal subunit protein bL19c (120 aa).

It belongs to the bacterial ribosomal protein bL19 family.

It localises to the plastid. Its subcellular location is the chloroplast. This Phaeodactylum tricornutum (strain CCAP 1055/1) protein is Large ribosomal subunit protein bL19c.